Reading from the N-terminus, the 122-residue chain is Large ribosomal subunit protein uL14c (122 aa).

The protein belongs to the universal ribosomal protein uL14 family. In terms of assembly, part of the 50S ribosomal subunit.

It is found in the plastid. It localises to the chloroplast. Binds to 23S rRNA. The polypeptide is Large ribosomal subunit protein uL14c (Chlorella vulgaris (Green alga)).